Here is a 134-residue protein sequence, read N- to C-terminus: Large ribosomal subunit protein eL14y (134 aa).

The protein belongs to the eukaryotic ribosomal protein eL14 family.

The chain is Large ribosomal subunit protein eL14y (RPL14B) from Arabidopsis thaliana (Mouse-ear cress).